The chain runs to 378 residues: Succinyl-diaminopimelate desuccinylase 2 (378 aa).

A Zn(2+)-binding site is contributed by His-68. The active site involves Asp-70. A Zn(2+)-binding site is contributed by Asp-101. Catalysis depends on Glu-135, which acts as the Proton acceptor. Glu-136, Glu-164, and His-350 together coordinate Zn(2+).

It belongs to the peptidase M20A family. DapE subfamily. Homodimer. Zn(2+) serves as cofactor. It depends on Co(2+) as a cofactor.

It catalyses the reaction N-succinyl-(2S,6S)-2,6-diaminopimelate + H2O = (2S,6S)-2,6-diaminopimelate + succinate. It functions in the pathway amino-acid biosynthesis; L-lysine biosynthesis via DAP pathway; LL-2,6-diaminopimelate from (S)-tetrahydrodipicolinate (succinylase route): step 3/3. In terms of biological role, catalyzes the hydrolysis of N-succinyl-L,L-diaminopimelic acid (SDAP), forming succinate and LL-2,6-diaminopimelate (DAP), an intermediate involved in the bacterial biosynthesis of lysine and meso-diaminopimelic acid, an essential component of bacterial cell walls. This Alteromonas mediterranea (strain DSM 17117 / CIP 110805 / LMG 28347 / Deep ecotype) protein is Succinyl-diaminopimelate desuccinylase 2.